The following is a 1532-amino-acid chain: Glycogen debranching enzyme (1532 aa).

Residue Ser64 is modified to Phosphoserine. Active-site residues include Asp526, His529, and Asp627.

It belongs to the glycogen debranching enzyme family. As to quaternary structure, monomer. Interacts with NHLRC1/malin. Post-translationally, the N-terminus is blocked. In terms of processing, ubiquitinated. In terms of tissue distribution, liver, kidney and lymphoblastoid cells express predominantly isoform 1; whereas muscle and heart express not only isoform 1, but also muscle-specific isoform mRNAs (isoforms 2, 3 and 4). Isoforms 5 and 6 are present in both liver and muscle.

It localises to the cytoplasm. It catalyses the reaction Transfers a segment of a (1-&gt;4)-alpha-D-glucan to a new position in an acceptor, which may be glucose or a (1-&gt;4)-alpha-D-glucan.. The catalysed reaction is Hydrolysis of (1-&gt;6)-alpha-D-glucosidic branch linkages in glycogen phosphorylase limit dextrin.. In terms of biological role, multifunctional enzyme acting as 1,4-alpha-D-glucan:1,4-alpha-D-glucan 4-alpha-D-glycosyltransferase and amylo-1,6-glucosidase in glycogen degradation. This is Glycogen debranching enzyme (AGL) from Homo sapiens (Human).